Reading from the N-terminus, the 387-residue chain is MARVIHTGDTHLGYQQYHAPQRRQDFLDAFDAVITDAIDEGVDAVVHAGDLYHDRQPGLRDILDTIALLRPLQDADIPFLAVVGNHEGTRDAQWLDLFETLGLAERLDDSPRVVADTAFYGLDYVPQSKRDDHDYTVADHDADHAALVSHGLFTPFPYANWDLDAVLADATVEFDAVLLGDNHTPDTAQLGDTWVTYCGSTERASASERDPRGYNIVSFSSDATTDVAISRKSLNTREFVFVDADLGPTDGTAFIQERLRERALDDAVVVVTITGDGDTVTPAEIERFGDDRGALLTRVNDRREFDTGDDAPDVDVSFADPDDAVEQRVRDLGLDEPARDVDRIVRDDTLADAAVRERVIQRAEAVLDDDADAADDDGRPTTVEEFQ.

D9, H11, D50, and N85 together coordinate Mn(2+). Residue H86 is the Proton donor of the active site. The Mn(2+) site is built by H150, D181, and H183. Residues 365-387 form a disordered region; sequence AVLDDDADAADDDGRPTTVEEFQ. A compositionally biased stretch (acidic residues) spans 366–375; it reads VLDDDADAAD.

The protein belongs to the MRE11/RAD32 family. In terms of assembly, homodimer. Forms a heterotetramer composed of two Mre11 subunits and two Rad50 subunits. It depends on Mn(2+) as a cofactor.

Its activity is regulated as follows. Nuclease activity is regulated by Rad50. Part of the Rad50/Mre11 complex, which is involved in the early steps of DNA double-strand break (DSB) repair. Mre11 binds to DSB ends and has both double-stranded 3'-5' exonuclease activity and single-stranded endonuclease activity. This chain is DNA double-strand break repair protein Mre11, found in Halobacterium salinarum (strain ATCC 700922 / JCM 11081 / NRC-1) (Halobacterium halobium).